The primary structure comprises 986 residues: Leucine-rich repeat receptor-like kinase protein HAR1 (986 aa).

Positions 1–25 are cleaved as a signal peptide; it reads MRIRVSYLLVLCFTLIWFRWTVVYS. LRR repeat units follow at residues 71 to 97, 98 to 121, 123 to 145, 146 to 170, 171 to 196, 198 to 218, 243 to 267, 268 to 291, 293 to 314, 316 to 339, 340 to 363, 365 to 387, 388 to 411, 412 to 435, 437 to 458, 459 to 482, 483 to 506, 508 to 530, 531 to 554, 555 to 578, and 579 to 603; these read DQNL…IGLL, EKLE…LASL, SLKV…ITVG, MTEL…IVKL, EKLK…EFQS, EFLG…LAKL, MENL…LGNL, TKLH…LSSM, SLMS…SFSK, KNLT…IGDL, PNLE…LGGN, RFLY…LCKS, GRLK…IGEC, RSLT…VFQL, SVTI…VISG, ESLG…MKNL, RALQ…VFEI, MLTK…ITHR, ASLT…MKNL, MDLS…IRFM, and TSLT…QFLV. N80, N102, N109, N128, and N141 each carry an N-linked (GlcNAc...) asparagine glycan. N255, N266, and N279 each carry an N-linked (GlcNAc...) asparagine glycan. N-linked (GlcNAc...) asparagine glycans are attached at residues N317 and N351. N-linked (GlcNAc...) asparagine glycans are attached at residues N513 and N518. 2 N-linked (GlcNAc...) asparagine glycosylation sites follow: N561 and N590. Residues 645 to 665 form a helical membrane-spanning segment; sequence IVIGIALATAVLLVAVTVHVV. A Protein kinase domain is found at 695 to 971; it reads LKEENIIGKG…TMREVVHMLT (277 aa). Residues 701–709 and K723 each bind ATP; that span reads IGKGGAGIV. The active-site Proton acceptor is the D820.

Belongs to the protein kinase superfamily. Ser/Thr protein kinase family. In terms of tissue distribution, expressed in roots, leaves, stems and flowers.

It is found in the cell membrane. It carries out the reaction L-seryl-[protein] + ATP = O-phospho-L-seryl-[protein] + ADP + H(+). It catalyses the reaction L-threonyl-[protein] + ATP = O-phospho-L-threonyl-[protein] + ADP + H(+). Functionally, LRR receptor kinase involved in the regulation of root and shoot growth, and root nodule organogenesis. Involved in long distance nodulation signaling events. Involved in the autoregulation of nodulation (AON), a long distance systemic signaling from root to shoot and back again, which allows legumes to limit the number of root nodules formed based on available nitrogen and previous rhizobial colonization. Acts from shoot to root to control AON. Involved in the regulation of root colonization by arbuscular mycorrhizal (AM) fungi. This is Leucine-rich repeat receptor-like kinase protein HAR1 from Lotus japonicus (Lotus corniculatus var. japonicus).